The primary structure comprises 921 residues: Levanase (921 aa).

The signal sequence occupies residues 1–23; the sequence is MMKWFAKLILSLSLAVVMAASSA. Residues 409 to 412, Q428, 460 to 461, 539 to 540, E591, and W679 each bind substrate; these read SASD, WS, and RD. D412 is an active-site residue.

It belongs to the glycosyl hydrolase 32 family.

The protein resides in the secreted. It carries out the reaction Random hydrolysis of (2-&gt;6)-beta-D-fructofuranosidic linkages in (2-&gt;6)-beta-D-fructans (levans) containing more than 3 fructose units.. Its activity is regulated as follows. Is completely inhibited by low concentrations of heavy metal ions, while Ca(2+) and Mg(2+) or chelating agents such as EDTA neither inhibit nor activate the enzyme to any significant extent. Its function is as follows. Catalyzes the hydrolysis of levan with endo-type specificity. The products of levan hydrolysis are a mixture of fructose and a series of fructooligosaccharides up to 12-mer, with levantriose being the major oligosaccharide obtained. Is not active towards sucrose. The polypeptide is Levanase (Bacillus sp. (strain L7)).